The sequence spans 505 residues: Catalase (505 aa).

Catalysis depends on residues histidine 56 and asparagine 129. Tyrosine 339 is a heme binding site.

The protein belongs to the catalase family. Heme is required as a cofactor.

The protein localises to the cytoplasm. It carries out the reaction 2 H2O2 = O2 + 2 H2O. Functionally, decomposes hydrogen peroxide into water and oxygen; serves to protect cells from the toxic effects of hydrogen peroxide. In Helicobacter pylori (strain J99 / ATCC 700824) (Campylobacter pylori J99), this protein is Catalase (katA).